A 98-amino-acid chain; its full sequence is Large ribosomal subunit protein uL23 (98 aa).

It belongs to the universal ribosomal protein uL23 family. Part of the 50S ribosomal subunit. Contacts protein L29, and trigger factor when it is bound to the ribosome.

One of the early assembly proteins it binds 23S rRNA. One of the proteins that surrounds the polypeptide exit tunnel on the outside of the ribosome. Forms the main docking site for trigger factor binding to the ribosome. The chain is Large ribosomal subunit protein uL23 from Jannaschia sp. (strain CCS1).